Reading from the N-terminus, the 216-residue chain is Ribose-5-phosphate isomerase A (216 aa).

Substrate-binding positions include Thr26–Thr29, Asp79–Asp82, and Lys92–Gly95. The Proton acceptor role is filled by Glu101. Lys119 is a substrate binding site.

It belongs to the ribose 5-phosphate isomerase family. As to quaternary structure, homodimer.

It carries out the reaction aldehydo-D-ribose 5-phosphate = D-ribulose 5-phosphate. It participates in carbohydrate degradation; pentose phosphate pathway; D-ribose 5-phosphate from D-ribulose 5-phosphate (non-oxidative stage): step 1/1. In terms of biological role, catalyzes the reversible conversion of ribose-5-phosphate to ribulose 5-phosphate. In Legionella pneumophila (strain Paris), this protein is Ribose-5-phosphate isomerase A.